The primary structure comprises 762 residues: MREKDLIKLEFDKVKEVLASYAHSPATKEKIQNLKPYTNKEKVKEEIELSKAFFDIAENVRLFEFEDIRELLKKAKLQGAILGVEDILKILNVINLTKEIRRVLSSHVQRLEPLRKVYKKLYTFSPLENLIIGSIDPRGFVKDEASEELLRVRKSIRAVEEEIKKRLDNLINRPDSAKFLSDRIVTIRNGRYVIPVKTSHVKKIFGIVHGTSSSGYTTYVEPQFVIHLNNKLTELKQKEEEEVRKVLQRITEYIGDYAKELLESFEACVEVDFQQCKYRFSKLVEGSFPDFGEWVELYEARHPVLVLVKEDVVPVGILLKEKKGLILTGPNTGGKTVALKTLGLSVLMFQSAIPVPASPNSKLPLFEKVFTDIGDEQSIEQNLSTFSAHVKNMAEFLPKSDENTLVLIDELGAGTDPIEGSALGIGILEYLKKKKAWVFVTTHHTPIKLYSTNSDYYTPASVLFDRETLKPLYKIAYNTVGESMAFYIAQKYGIPSEVIEIAKRHVGEFGEQYIKAMEKLSDYVKKYEEEFRKLEELRKELQKEKEEVEKLRKEYEEAKRKGWKEAYKEAREYLRKLVQESEEIFKKAKEKKEIKEFVSKKREEIENLAPQKPQKLEVGDLVEFMGKKGKVLEVKGNKALVLVDHLRMWLDTRELQKVGKAEPQKETKVTVQTPVMEKRDTLNLIGKDVETAVRELEKFIEEAYSAGYKVVKVIHGIGSGKLKSAVREALSKNEKVKFFRDAYPKEGGSGVTVVYLEYGEET.

329–336 contacts ATP; it reads GPNTGGKT. The region spanning 682–757 is the Smr domain; the sequence is LNLIGKDVET…GSGVTVVYLE (76 aa).

This sequence belongs to the DNA mismatch repair MutS family. MutS2 subfamily. As to quaternary structure, homodimer. Binds to stalled ribosomes, contacting rRNA.

Functionally, endonuclease that is involved in the suppression of homologous recombination and thus may have a key role in the control of bacterial genetic diversity. In terms of biological role, acts as a ribosome collision sensor, splitting the ribosome into its 2 subunits. Detects stalled/collided 70S ribosomes which it binds and splits by an ATP-hydrolysis driven conformational change. Acts upstream of the ribosome quality control system (RQC), a ribosome-associated complex that mediates the extraction of incompletely synthesized nascent chains from stalled ribosomes and their subsequent degradation. Probably generates substrates for RQC. This chain is Endonuclease MutS2, found in Aquifex aeolicus (strain VF5).